We begin with the raw amino-acid sequence, 24 residues long: General odorant-binding protein (24 aa).

This sequence belongs to the PBP/GOBP family. In terms of assembly, homodimer. As to expression, antenna.

In terms of biological role, present in the aqueous fluid surrounding olfactory sensory dendrites and are thought to aid in the capture and transport of hydrophobic odorants into and through this fluid. The chain is General odorant-binding protein from Antheraea polyphemus (Polyphemus moth).